The chain runs to 890 residues: Wolframin (890 aa).

Residue Met1 is modified to N-acetylmethionine. The interval 1 to 86 (MDSNTAPLGP…TGPTKGDMEI (86 aa)) is disordered. The interval 1–321 (MDSNTAPLGP…MHWLSTIIPT (321 aa)) is interaction with ATP6V1A. The span at 10–20 (PSCPQPPPAPQ) shows a compositional bias: pro residues. Thr30 carries the phosphothreonine; by FAM20C modification. Ser32 carries the post-translational modification Phosphoserine; by FAM20C. Phosphoserine is present on Ser157. 10 helical membrane passes run 314–334 (WLSTIIPTHHINALIFFFIVS), 340–360 (FFAFFIPLVIFYLSFISMVIC), 402–422 (LEPYAHFLLSVFFVIFSFPIA), 427–447 (IPCSELAVITGFFTVTSYLSL), 465–485 (AGLLSLLPSMPLNWPYLKVLG), 496–516 (LVVLNVSVPCLLYVYLLYLFF), 529–549 (CYLVPYLVCFMWCELSVVILL), 563–583 (YFLFLFALPILVAGLALVGVL), 589–609 (FTSLELTKIAVTVAVCSVPLL), and 632–652 (MVKLILVWLTAIVLFCWFYVY). At 653–869 (RSEGMKVYNS…HVKIEHDWRS (217 aa)) the chain is on the lumenal side. Asn661 and Asn746 each carry an N-linked (GlcNAc...) asparagine glycan. The helical transmembrane segment at 870 to 890 (TVHGAVKFAFDFFFFPFLSAA) threads the bilayer.

Interacts with ATP6V1A. In terms of tissue distribution, highly expressed in heart followed by brain, placenta, lung and pancreas. Weakly expressed in liver, kidney and skeletal muscle. Also expressed in islet and beta-cell insulinoma cell line.

It localises to the endoplasmic reticulum membrane. The protein resides in the cytoplasmic vesicle. The protein localises to the secretory vesicle. In terms of biological role, participates in the regulation of cellular Ca(2+) homeostasis, at least partly, by modulating the filling state of the endoplasmic reticulum Ca(2+) store. Negatively regulates the ER stress response and positively regulates the stability of V-ATPase subunits ATP6V1A and ATP1B1 by preventing their degradation through an unknown proteasome-independent mechanism. The polypeptide is Wolframin (WFS1) (Homo sapiens (Human)).